A 921-amino-acid polypeptide reads, in one-letter code: Sodium/calcium exchanger 2 (921 aa).

The signal sequence occupies residues 1–20 (MAPLALVGVALLLGAPHCLG). Residues 21 to 68 (EATPTPSLPPPPANDSDASPGGCQGSYRCQPGVLLPVWEPDDPSLGDK) lie on the Extracellular side of the membrane. The disordered stretch occupies residues 23–42 (TPTPSLPPPPANDSDASPGG). Residue N34 is glycosylated (N-linked (GlcNAc...) asparagine). The helical transmembrane segment at 69 to 90 (AARAVVYFVAMVYMFLGLSIIA) threads the bilayer. Residues 91-130 (DRFMASIEVITSKEKEITITKANGETSVGTVRIWNETVSN) are Cytoplasmic-facing. Residues 131–152 (LTLMALGSSAPEILLSVIEVCG) traverse the membrane as a helical segment. One copy of the Alpha-1 repeat lies at 135–175 (ALGSSAPEILLSVIEVCGHNFQAGELGPGTIVGSAAFNMFV). The Extracellular segment spans residues 153-164 (HNFQAGELGPGT). The chain crosses the membrane as a helical span at residues 165 to 185 (IVGSAAFNMFVVIAVCVYVIP). Residues 186-196 (AGESRKIKHLR) are Cytoplasmic-facing. The helical transmembrane segment at 197 to 219 (VFFVTASWSIFAYVWLYLILAVF) threads the bilayer. Residues 220–222 (SPG) lie on the Extracellular side of the membrane. A helical membrane pass occupies residues 223-246 (VVQVWEALLTLVFFPVCVVFAWMA). Topologically, residues 247–720 (DKRLLFYKYV…DGSREERLPS (474 aa)) are cytoplasmic. Residues 248 to 267 (KRLLFYKYVYKRYRTDPRSG) form a putative calmodulin-binding region region. The disordered stretch occupies residues 372–391 (AADAARRPGANDGAPDDEDD). Calx-beta domains are found at residues 384–483 (GAPD…VRLL) and 512–612 (ATVT…IELG). Ca(2+)-binding residues include E407, D443, D468, D469, I471, E473, E476, D518, D519, D520, E536, D598, E599, and E600. S622 bears the Phosphoserine mark. Position 665 (E665) interacts with Ca(2+). Residues 721–740 (CFDYVMHFLTVFWKVLFACL) traverse the membrane as a helical segment. Over 741 to 747 (PPTEYCH) the chain is Extracellular. Residues 748-770 (GWACFGVCILVIGLLTALIGDLA) form a helical membrane-spanning segment. Over 771–772 (SH) the chain is Cytoplasmic. The chain crosses the membrane as a helical span at residues 773–791 (FGCTVGLKDSVNAVVFVAL). The stretch at 790 to 826 (ALGTSIPDTFASKVAALQDQCADASIGNVTGSNAVNV) is one Alpha-2 repeat. Over 792–822 (GTSIPDTFASKVAALQDQCADASIGNVTGSN) the chain is Extracellular. N817 is a glycosylation site (N-linked (GlcNAc...) asparagine). A helical transmembrane segment spans residues 823–843 (AVNVFLGLGVAWSVAAVYWAV). The Cytoplasmic portion of the chain corresponds to 844–854 (QGRPFEVRTGT). The helical transmembrane segment at 855–875 (LAFSVTLFTVFAFVGIAVLLY) threads the bilayer. Over 876-892 (RRRPHIGGELGGPRGPK) the chain is Extracellular. A helical membrane pass occupies residues 893-909 (LATTALFLGLWFLYILF). Over 910–921 (ASLEAYCHIRGF) the chain is Cytoplasmic.

This sequence belongs to the Ca(2+):cation antiporter (CaCA) (TC 2.A.19) family. SLC8 subfamily. Detected in neocortex and hippocampus on pyramidal cells, astrocyte processes and dendrites (at protein level). Brain and skeletal muscle.

It localises to the cell membrane. Its subcellular location is the basolateral cell membrane. The protein resides in the perikaryon. The protein localises to the cell projection. It is found in the dendrite. It localises to the dendritic spine. It catalyses the reaction Ca(2+)(in) + 3 Na(+)(out) = Ca(2+)(out) + 3 Na(+)(in). Calcium transport is down-regulated by Na(+) and stimulated by Ca(2+). Its function is as follows. Mediates the electrogenic exchange of Ca(2+) against Na(+) ions across the cell membrane, and thereby contributes to the regulation of cytoplasmic Ca(2+) levels and Ca(2+)-dependent cellular processes. Contributes to cellular Ca(2+) homeostasis in excitable cells. Contributes to the rapid decrease of cytoplasmic Ca(2+) levels back to baseline after neuronal activation, and thereby contributes to modulate synaptic plasticity, learning and memory. Plays a role in regulating urinary Ca(2+) and Na(+) excretion. This is Sodium/calcium exchanger 2 (Slc8a2) from Rattus norvegicus (Rat).